We begin with the raw amino-acid sequence, 1419 residues long: Collagen alpha-1(II) chain (1419 aa).

Positions 1–25 (MIRLGAPQSLVLLTLLIATVLQCQG) are cleaved as a signal peptide. The propeptide at 26-113 (QDARKLGPKG…PGLGGGNFAA (88 aa)) is N-terminal propeptide. The interval 28–1168 (ARKLGPKGQK…GQREKGPDPL (1141 aa)) is disordered. Composition is skewed to basic and acidic residues over residues 36–47 (QKGEPGDIKDII) and 64–85 (PRGD…RDGE). Pro residues predominate over residues 89–104 (PGNPGPPGPPGPPGPP). The residue at position 122 (lysine 122) is a 5-hydroxylysine. The O-linked (Gal...) hydroxylysine glycan is linked to lysine 122. The span at 124-135 (GGAQMGVMQGPM) shows a compositional bias: low complexity. Residues 133-1146 (GPMGPMGPRG…PGPPGPPGPP (1014 aa)) form a triple-helical region region. A compositionally biased stretch (pro residues) spans 140–149 (PRGPPGPAGA). The span at 150–171 (PGPQGFQGNPGEPGEPGVSGPI) shows a compositional bias: low complexity. The segment covering 183 to 197 (PGDDGEAGKPGKAGE) has biased composition (basic and acidic residues). 3 positions are modified to 5-hydroxylysine: lysine 219, lysine 231, and lysine 240. 3 O-linked (Gal...) hydroxylysine glycosylation sites follow: lysine 219, lysine 231, and lysine 240. Low complexity-rich tracts occupy residues 242–252 (ESGSPGENGSP) and 267–282 (TGPA…DGQP). Residues 292–301 (GPAGGPGFLG) are compositionally biased toward gly residues. A 5-hydroxylysine modification is found at lysine 306. O-linked (Gal...) hydroxylysine glycosylation occurs at lysine 306. The segment covering 335–363 (PAGASGNPGTDGIPGAKGSAGAPGIAGAP) has biased composition (low complexity). Residues 365-374 (FPGPRGPPGP) show a composition bias toward pro residues. Residues 404-417 (ETGPAGPQGAPGPA) show a composition bias toward low complexity. Residues lysine 540 and lysine 552 each carry the 5-hydroxylysine modification. O-linked (Gal...) hydroxylysine glycans are attached at residues lysine 540 and lysine 552. Low complexity predominate over residues 554 to 563 (LAGAPGLRGL). A 4-hydroxyproline mark is found at proline 591 and proline 600. Residue proline 602 is modified to 3-hydroxyproline; partial. A 4-hydroxyproline mark is found at proline 603 and proline 606. Positions 638 to 668 (ERGSPGAQGLQGPRGLPGTPGTDGPKGAAGP) are enriched in low complexity. Residues 696–707 (KGDRGDVGEKGP) show a composition bias toward basic and acidic residues. Low complexity-rich tracts occupy residues 765–780 (AGFA…PGAK) and 809–846 (PTGV…NGNP). At proline 839 the chain carries 3-hydroxyproline; partial. A 4-hydroxyproline mark is found at proline 840, proline 846, and proline 852. Over residues 1001–1011 (APGPPGSPGPA) the composition is skewed to pro residues. Residues 1047–1061 (RGDKGEAGEPGERGL) show a composition bias toward basic and acidic residues. 3-hydroxyproline; partial is present on proline 1076. Low complexity-rich tracts occupy residues 1080–1089 (SGDQGTSGPA) and 1103–1113 (PSGKDGSNGIP). Position 1113 is a 4-hydroxyproline (proline 1113). Proline 1118 is modified (3-hydroxyproline). Proline 1119 carries the post-translational modification 4-hydroxyproline. The segment covering 1131 to 1148 (AGPPGNPGPPGPPGPPGP) has biased composition (pro residues). Proline 1133 carries the 3-hydroxyproline; partial modification. 4-hydroxyproline is present on residues proline 1134 and proline 1137. A 3-hydroxyproline; partial modification is found at proline 1139. A 4-hydroxyproline mark is found at proline 1140 and proline 1143. Proline 1145 is modified (3-hydroxyproline; partial). The residue at position 1146 (proline 1146) is a 4-hydroxyproline. Residues 1147–1173 (GPGIDMSAFAGLGQREKGPDPLQYMRA) form a nonhelical region (C-terminal) region. The 235-residue stretch at 1185-1419 (VEVDATLKSL…GVDIGPVCFL (235 aa)) folds into the Fibrillar collagen NC1 domain. 3 disulfide bridges follow: cysteine 1215-cysteine 1247, cysteine 1255-cysteine 1417, and cysteine 1325-cysteine 1370. Aspartate 1233, asparagine 1235, glutamine 1236, cysteine 1238, and aspartate 1241 together coordinate Ca(2+). N-linked (GlcNAc...) asparagine glycosylation is present at asparagine 1320.

It belongs to the fibrillar collagen family. Homotrimers of alpha 1(II) chains. Contains mostly 4-hydroxyproline. Prolines at the third position of the tripeptide repeating unit (G-X-P) are 4-hydroxylated in some or all of the chains. In terms of processing, contains 3-hydroxyproline at a few sites. This modification occurs on the first proline residue in the sequence motif Gly-Pro-Hyp, where Hyp is 4-hydroxyproline. Post-translationally, lysine residues at the third position of the tripeptide repeating unit (G-X-Y) are 5-hydroxylated in some or all of the chains. O-glycosylated on hydroxylated lysine residues. The O-linked glycan consists of a Glc-Gal disaccharide. In terms of tissue distribution, expressed in chondrocytes.

It is found in the secreted. The protein resides in the extracellular space. Its subcellular location is the extracellular matrix. Functionally, type II collagen is specific for cartilaginous tissues. It is essential for the normal embryonic development of the skeleton, for linear growth and for the ability of cartilage to resist compressive forces. This Rattus norvegicus (Rat) protein is Collagen alpha-1(II) chain.